Consider the following 407-residue polypeptide: Glycolate oxidase iron-sulfur subunit (407 aa).

4Fe-4S ferredoxin-type domains follow at residues 14–47 and 66–95; these read RALEADSILRACVHCGFCTATCPTYQLLGDELDG and LKTQEHLDRCLTCRNCETTCPSGVRYHNLL. Positions 25, 28, 31, 35, 75, 78, 81, and 85 each coordinate [4Fe-4S] cluster.

The glycolate oxidase likely consists of three subunits, GlcD, GlcE and GlcF. It depends on [4Fe-4S] cluster as a cofactor.

Its subcellular location is the cell inner membrane. The enzyme catalyses glycolate + A = glyoxylate + AH2. It catalyses the reaction (R)-lactate + A = pyruvate + AH2. With respect to regulation, in vitro the glycolate oxidase activity is inhibited by the sulfhydryl inhibitors CuSO4 and PCMB, by KCN, but not by the metal complexing agent EDTA. Functionally, component of a complex that catalyzes the oxidation of glycolate to glyoxylate. Is required for E.coli to grow on glycolate as a sole source of carbon. Is also able to oxidize D-lactate ((R)-lactate) with a similar rate. Does not link directly to O(2), and 2,6-dichloroindophenol (DCIP) and phenazine methosulfate (PMS) can act as artificial electron acceptors in vitro, but the physiological molecule that functions as a primary electron acceptor during glycolate oxidation is unknown. The protein is Glycolate oxidase iron-sulfur subunit of Escherichia coli (strain K12).